We begin with the raw amino-acid sequence, 926 residues long: Staphylococcal nuclease domain-containing protein 1 (926 aa).

The segment covering M1 to A17 has biased composition (low complexity). The segment at M1–S24 is disordered. TNase-like domains lie at K23 to P167, N195 to D333, K346 to K505, and L535 to N674. Residues T749–E807 form the Tudor domain. The involved in dimethylarginine binding stretch occupies residues F760–N788.

Associates with the RNA-induced silencing complex (RISC). Interacts with the RISC components AGO2, Fmr1 and vig. Interacts with piwi. As to expression, expressed in adult ovaries and testis (at protein level).

The protein localises to the cytoplasm. It is found in the nucleus. The enzyme catalyses Endonucleolytic cleavage to nucleoside 3'-phosphates and 3'-phosphooligonucleotide end-products.. Functionally, endonuclease which shows activity towards both DNA and RNA substrates. Has a role in translation regulation throught its association with the with the RNA-induced silencing complex (RISC). Plays a role in spermatogenesis probably by negatively regulating piwi expression in the germline. Together with piwi, might be involved in transposon repression in the germline. The protein is Staphylococcal nuclease domain-containing protein 1 of Drosophila melanogaster (Fruit fly).